The sequence spans 96 residues: Co-chaperonin GroES (96 aa).

This sequence belongs to the GroES chaperonin family. Heptamer of 7 subunits arranged in a ring. Interacts with the chaperonin GroEL.

It localises to the cytoplasm. Together with the chaperonin GroEL, plays an essential role in assisting protein folding. The GroEL-GroES system forms a nano-cage that allows encapsulation of the non-native substrate proteins and provides a physical environment optimized to promote and accelerate protein folding. GroES binds to the apical surface of the GroEL ring, thereby capping the opening of the GroEL channel. The protein is Co-chaperonin GroES of Teredinibacter turnerae (strain ATCC 39867 / T7901).